We begin with the raw amino-acid sequence, 426 residues long: Serine hydroxymethyltransferase (426 aa).

Residues L113 and 117 to 119 (GHL) each bind (6S)-5,6,7,8-tetrahydrofolate. An N6-(pyridoxal phosphate)lysine modification is found at K222. 363-365 (SAF) contributes to the (6S)-5,6,7,8-tetrahydrofolate binding site.

It belongs to the SHMT family. As to quaternary structure, homodimer. The cofactor is pyridoxal 5'-phosphate.

The protein resides in the cytoplasm. The enzyme catalyses (6R)-5,10-methylene-5,6,7,8-tetrahydrofolate + glycine + H2O = (6S)-5,6,7,8-tetrahydrofolate + L-serine. It participates in one-carbon metabolism; tetrahydrofolate interconversion. Its pathway is amino-acid biosynthesis; glycine biosynthesis; glycine from L-serine: step 1/1. Catalyzes the reversible interconversion of serine and glycine with tetrahydrofolate (THF) serving as the one-carbon carrier. This reaction serves as the major source of one-carbon groups required for the biosynthesis of purines, thymidylate, methionine, and other important biomolecules. Also exhibits THF-independent aldolase activity toward beta-hydroxyamino acids, producing glycine and aldehydes, via a retro-aldol mechanism. This Phocaeicola vulgatus (strain ATCC 8482 / DSM 1447 / JCM 5826 / CCUG 4940 / NBRC 14291 / NCTC 11154) (Bacteroides vulgatus) protein is Serine hydroxymethyltransferase.